A 357-amino-acid polypeptide reads, in one-letter code: tRNA-specific 2-thiouridylase MnmA (357 aa).

Residues 6-13 and leucine 32 each bind ATP; that span reads AMSGGVDS. Catalysis depends on cysteine 101, which acts as the Nucleophile. Cysteine 101 and cysteine 193 are oxidised to a cystine. An ATP-binding site is contributed by glycine 125. Positions 143–145 are interaction with tRNA; sequence KDQ. Cysteine 193 serves as the catalytic Cysteine persulfide intermediate.

This sequence belongs to the MnmA/TRMU family.

Its subcellular location is the cytoplasm. It carries out the reaction S-sulfanyl-L-cysteinyl-[protein] + uridine(34) in tRNA + AH2 + ATP = 2-thiouridine(34) in tRNA + L-cysteinyl-[protein] + A + AMP + diphosphate + H(+). Catalyzes the 2-thiolation of uridine at the wobble position (U34) of tRNA, leading to the formation of s(2)U34. The polypeptide is tRNA-specific 2-thiouridylase MnmA (Mycolicibacterium vanbaalenii (strain DSM 7251 / JCM 13017 / BCRC 16820 / KCTC 9966 / NRRL B-24157 / PYR-1) (Mycobacterium vanbaalenii)).